Here is a 339-residue protein sequence, read N- to C-terminus: Ribosomal RNA large subunit methyltransferase F (339 aa).

The disordered stretch occupies residues 1–26; the sequence is MTAPSTPKPQRKKPKTATTAKPVVPR.

The protein belongs to the methyltransferase superfamily. METTL16/RlmF family.

Its subcellular location is the cytoplasm. It carries out the reaction adenosine(1618) in 23S rRNA + S-adenosyl-L-methionine = N(6)-methyladenosine(1618) in 23S rRNA + S-adenosyl-L-homocysteine + H(+). Its function is as follows. Specifically methylates the adenine in position 1618 of 23S rRNA. The polypeptide is Ribosomal RNA large subunit methyltransferase F (Pseudomonas fluorescens (strain SBW25)).